A 313-amino-acid polypeptide reads, in one-letter code: 4-hydroxy-3-methylbut-2-enyl diphosphate reductase (313 aa).

Cys12 contacts [4Fe-4S] cluster. Residues His41 and His74 each coordinate (2E)-4-hydroxy-3-methylbut-2-enyl diphosphate. Dimethylallyl diphosphate-binding residues include His41 and His74. Isopentenyl diphosphate-binding residues include His41 and His74. Residue Cys96 participates in [4Fe-4S] cluster binding. His124 is a (2E)-4-hydroxy-3-methylbut-2-enyl diphosphate binding site. Dimethylallyl diphosphate is bound at residue His124. His124 contacts isopentenyl diphosphate. Glu126 acts as the Proton donor in catalysis. Residue Thr167 participates in (2E)-4-hydroxy-3-methylbut-2-enyl diphosphate binding. Cys197 serves as a coordination point for [4Fe-4S] cluster. 4 residues coordinate (2E)-4-hydroxy-3-methylbut-2-enyl diphosphate: Ser225, Ser226, Asn227, and Ser269. Dimethylallyl diphosphate contacts are provided by Ser225, Ser226, Asn227, and Ser269. Isopentenyl diphosphate contacts are provided by Ser225, Ser226, Asn227, and Ser269.

Belongs to the IspH family. [4Fe-4S] cluster is required as a cofactor.

The enzyme catalyses isopentenyl diphosphate + 2 oxidized [2Fe-2S]-[ferredoxin] + H2O = (2E)-4-hydroxy-3-methylbut-2-enyl diphosphate + 2 reduced [2Fe-2S]-[ferredoxin] + 2 H(+). The catalysed reaction is dimethylallyl diphosphate + 2 oxidized [2Fe-2S]-[ferredoxin] + H2O = (2E)-4-hydroxy-3-methylbut-2-enyl diphosphate + 2 reduced [2Fe-2S]-[ferredoxin] + 2 H(+). It functions in the pathway isoprenoid biosynthesis; dimethylallyl diphosphate biosynthesis; dimethylallyl diphosphate from (2E)-4-hydroxy-3-methylbutenyl diphosphate: step 1/1. The protein operates within isoprenoid biosynthesis; isopentenyl diphosphate biosynthesis via DXP pathway; isopentenyl diphosphate from 1-deoxy-D-xylulose 5-phosphate: step 6/6. Its function is as follows. Catalyzes the conversion of 1-hydroxy-2-methyl-2-(E)-butenyl 4-diphosphate (HMBPP) into a mixture of isopentenyl diphosphate (IPP) and dimethylallyl diphosphate (DMAPP). Acts in the terminal step of the DOXP/MEP pathway for isoprenoid precursor biosynthesis. This chain is 4-hydroxy-3-methylbut-2-enyl diphosphate reductase, found in Baumannia cicadellinicola subsp. Homalodisca coagulata.